A 48-amino-acid chain; its full sequence is Ambineela (48 aa).

In terms of assembly, monomer. Post-translationally, the blue color is due to an unidentified non-fluorescent cofactor, covalently bound to it.

Functionally, ambineela is a blue protein and has a pI of 8.7. This Acidianus ambivalens (Desulfurolobus ambivalens) protein is Ambineela.